The following is a 203-amino-acid chain: Glycerol-3-phosphate acyltransferase (203 aa).

6 consecutive transmembrane segments (helical) span residues 3–23, 51–71, 74–94, 116–136, 140–160, and 164–178; these read ILLA…VVVS, KAAI…VWLV, FGIG…LGHL, AVHP…AFFF, SLAA…LFGT, and PVAW…LLIW.

It belongs to the PlsY family. As to quaternary structure, probably interacts with PlsX.

It localises to the cell inner membrane. The enzyme catalyses an acyl phosphate + sn-glycerol 3-phosphate = a 1-acyl-sn-glycero-3-phosphate + phosphate. It functions in the pathway lipid metabolism; phospholipid metabolism. Its function is as follows. Catalyzes the transfer of an acyl group from acyl-phosphate (acyl-PO(4)) to glycerol-3-phosphate (G3P) to form lysophosphatidic acid (LPA). This enzyme utilizes acyl-phosphate as fatty acyl donor, but not acyl-CoA or acyl-ACP. The sequence is that of Glycerol-3-phosphate acyltransferase from Burkholderia pseudomallei (strain 1710b).